A 373-amino-acid polypeptide reads, in one-letter code: UDP-N-acetylglucosamine--N-acetylmuramyl-(pentapeptide) pyrophosphoryl-undecaprenol N-acetylglucosamine transferase (373 aa).

UDP-N-acetyl-alpha-D-glucosamine-binding positions include 14 to 16 (TAG), N128, R165, S199, and Q295.

The protein belongs to the glycosyltransferase 28 family. MurG subfamily.

It localises to the cell membrane. The enzyme catalyses di-trans,octa-cis-undecaprenyl diphospho-N-acetyl-alpha-D-muramoyl-L-alanyl-D-glutamyl-meso-2,6-diaminopimeloyl-D-alanyl-D-alanine + UDP-N-acetyl-alpha-D-glucosamine = di-trans,octa-cis-undecaprenyl diphospho-[N-acetyl-alpha-D-glucosaminyl-(1-&gt;4)]-N-acetyl-alpha-D-muramoyl-L-alanyl-D-glutamyl-meso-2,6-diaminopimeloyl-D-alanyl-D-alanine + UDP + H(+). It participates in cell wall biogenesis; peptidoglycan biosynthesis. Functionally, cell wall formation. Catalyzes the transfer of a GlcNAc subunit on undecaprenyl-pyrophosphoryl-MurNAc-pentapeptide (lipid intermediate I) to form undecaprenyl-pyrophosphoryl-MurNAc-(pentapeptide)GlcNAc (lipid intermediate II). This Mycobacterium sp. (strain JLS) protein is UDP-N-acetylglucosamine--N-acetylmuramyl-(pentapeptide) pyrophosphoryl-undecaprenol N-acetylglucosamine transferase.